The primary structure comprises 74 residues: MSSGGLLLLLGLLTLWEVLTPVSSKDRPKKLGLCPPRPQKPCVKECKNDWSCPGQQKCCNYGCIDECRDPIFVN.

An N-terminal signal peptide occupies residues 1-24; the sequence is MSSGGLLLLLGLLTLWEVLTPVSS. Positions 27 to 71 constitute a WAP domain; sequence RPKKLGLCPPRPQKPCVKECKNDWSCPGQQKCCNYGCIDECRDPI. Cystine bridges form between Cys-34-Cys-59, Cys-42-Cys-63, Cys-46-Cys-58, and Cys-52-Cys-67.

The protein belongs to the venom waprin family. Expressed by the venom gland.

The protein localises to the secreted. In terms of biological role, damages membranes of susceptible bacteria. Has no hemolytic activity. Not toxic to mice. Does not inhibit the proteinases elastase and cathepsin G. This Pseudechis porphyriacus (Red-bellied black snake) protein is Porwaprin-a.